Consider the following 232-residue polypeptide: Platelet-activating factor acetylhydrolase IB subunit alpha1 (232 aa).

A disordered region spans residues 1-20 (MSGEGENPASKPTPVQDVQG). Residue Ser2 is modified to N-acetylserine. Ser2 carries the phosphoserine modification. Active-site residues include Ser48, Asp193, and His196.

It belongs to the 'GDSL' lipolytic enzyme family. Platelet-activating factor acetylhydrolase IB beta/gamma subunits subfamily. As to quaternary structure, forms a catalytic dimer which is either homodimer (alpha1/alpha1 homodimer) or heterodimer with PAFAH1B2 (alpha1/alpha2 heterodimer). Component of the cytosolic (PAF-AH (I)) heterotetrameric enzyme, which is composed of PAFAH1B1 (beta), PAFAH1B2 (alpha2) and PAFAH1B3 (alpha1) subunits. The catalytic activity of the enzyme resides in the alpha1 (PAFAH1B3) and alpha2 (PAFAH1B2) subunits, whereas the beta subunit (PAFAH1B1) has regulatory activity. Trimer formation is not essential for the catalytic activity. Interacts with VLDLR; this interaction may modulate the Reelin pathway. Expressed in brain, spleen, lung, liver, kidney and testis. Not expressed in heart and skeletal muscle. Expressed in fetal brain as heterodimer. Not expressed in adult tissues. Expressed exclusively in granule cells.

It is found in the cytoplasm. The enzyme catalyses a 1-O-alkyl-2-acetyl-sn-glycero-3-phosphocholine + H2O = a 1-O-alkyl-sn-glycero-3-phosphocholine + acetate + H(+). It carries out the reaction 1-O-hexadecyl-2-acetyl-sn-glycero-3-phosphocholine + H2O = 1-O-hexadecyl-sn-glycero-3-phosphocholine + acetate + H(+). It catalyses the reaction 1-O-hexadecyl-2-acetyl-sn-glycero-3-phosphate + H2O = 1-O-hexadecyl-sn-glycero-3-phosphate + acetate + H(+). With respect to regulation, beta subunit (PAFAH1B1) inhibits the acetylhydrolase activity of the alpha1/alpha1 catalytic homodimer. Functionally, alpha1 catalytic subunit of the cytosolic type I platelet-activating factor (PAF) acetylhydrolase (PAF-AH (I)) heterotetrameric enzyme that catalyzes the hydrolyze of the acetyl group at the sn-2 position of PAF and its analogs and modulates the action of PAF. The activity and substrate specificity of PAF-AH (I) are affected by its subunit composition. Both alpha1/alpha1 homodimer (PAFAH1B3/PAFAH1B3 homodimer) and alpha1/alpha2 heterodimer(PAFAH1B3/PAFAH1B2 heterodimer) hydrolyze 1-O-alkyl-2-acetyl-sn-glycero-3-phosphoric acid (AAGPA) more efficiently than PAF, but they have little hydrolytic activity towards 1-O-alkyl-2-acetyl-sn-glycero-3-phosphorylethanolamine (AAGPE). Plays an important role during the development of brain. This Rattus norvegicus (Rat) protein is Platelet-activating factor acetylhydrolase IB subunit alpha1.